The primary structure comprises 457 residues: Tubulin gamma-2 chain (457 aa).

A GTP-binding site is contributed by 142 to 148 (AGGTGSG).

Belongs to the tubulin family. In terms of assembly, interacts with Ote. As to expression, expressed in nurse cells and oocytes of developing egg chambers.

The protein resides in the cytoplasm. It is found in the cytoskeleton. The protein localises to the microtubule organizing center. Its subcellular location is the centrosome. It localises to the spindle. Tubulin is the major constituent of microtubules. The gamma chain is found at microtubule organizing centers (MTOC) such as the spindle poles or the centrosome, suggesting that it is involved in the minus-end nucleation of microtubule assembly. Required for oocyte activation and consequently for organization of the female meiotic spindle. Essential for centrosome organization and assembly of biastral mitotic spindles in embryos. Plays a role in stabilizing the augmin complex on the meiotic spindle. The chain is Tubulin gamma-2 chain (gammaTub37C) from Drosophila melanogaster (Fruit fly).